The primary structure comprises 1148 residues: Protocadherin-19 (1148 aa).

A signal peptide spans 1–21 (MESLLLPVLLLLAILWTQAAA). Cadherin domains lie at 22 to 129 (LINL…APSF), 130 to 238 (PAAQ…NPVF), 239 to 346 (SEST…PPVI), 350 to 453 (SVNS…HPHF), 454 to 563 (SKPY…TPVI), and 569 to 672 (INGT…QESM). Topologically, residues 22–678 (LINLKYSVEE…QESMGSVNLS (657 aa)) are extracellular. Ca(2+) contacts are provided by Glu31, Glu32, Asp88, and Asp90. A disulfide bridge connects residues Cys93 and Cys99. Residues Asp121, Asn123, Asp124, Asn125, Glu140, Asp155, Asp157, Glu199, Asp212, Asp230, Ser231, Asn232, Asp233, Asn234, and Glu249 each coordinate Ca(2+). A glycan (N-linked (GlcNAc...) asparagine) is linked at Asn261. 15 residues coordinate Ca(2+): Asp264, Asp266, Asn270, Asp305, Glu307, Asp338, Asn340, Asp341, Asn342, Glu360, Asp375, Asp377, Asn381, Asp412, and Glu414. Asn420 carries N-linked (GlcNAc...) asparagine glycosylation. Ca(2+) is bound by residues Asp427, Asp445, Glu446, Asn447, Asp448, Asn449, Glu464, Asp479, Asp481, Asn485, Asn522, Glu524, and Asp537. Asn485 carries N-linked (GlcNAc...) asparagine glycosylation. Residue Asn546 is glycosylated (N-linked (GlcNAc...) asparagine). 5 residues coordinate Ca(2+): Asp555, Val556, Asn557, Asp558, and Asn559. Asn570 is a glycosylation site (N-linked (GlcNAc...) asparagine). Residues Asp594, Asp596, Asn600, and Asp646 each contribute to the Ca(2+) site. Asn676 carries N-linked (GlcNAc...) asparagine glycosylation. A helical membrane pass occupies residues 679-699 (LIFIIALGSIAGILFVTMIFV). At 700 to 1148 (AIKCKRDNKE…GVKRLKDIVL (449 aa)) the chain is on the cytoplasmic side. Disordered regions lie at residues 901-921 (GNSL…EHDV) and 1100-1148 (NVNN…DIVL). 3 stretches are compositionally biased toward basic and acidic residues: residues 906–921 (DSGH…EHDV), 1109–1123 (SEAE…KVMH), and 1130–1148 (KEGR…DIVL).

As to quaternary structure, homodimer; antiparallel. Moderately expressed in all regions of the brain examined, with lowest levels found in the cerebellum. Moderate expression is also found in ovary, and low expression in all other tissues tested. Also detected in primary skin fibroblast.

It localises to the cell membrane. In terms of biological role, calcium-dependent cell-adhesion protein. The sequence is that of Protocadherin-19 (PCDH19) from Homo sapiens (Human).